Here is a 262-residue protein sequence, read N- to C-terminus: Acyl-[acyl-carrier-protein]--UDP-N-acetylglucosamine O-acyltransferase (262 aa).

The protein belongs to the transferase hexapeptide repeat family. LpxA subfamily. In terms of assembly, homotrimer.

Its subcellular location is the cytoplasm. The catalysed reaction is a (3R)-hydroxyacyl-[ACP] + UDP-N-acetyl-alpha-D-glucosamine = a UDP-3-O-[(3R)-3-hydroxyacyl]-N-acetyl-alpha-D-glucosamine + holo-[ACP]. It participates in glycolipid biosynthesis; lipid IV(A) biosynthesis; lipid IV(A) from (3R)-3-hydroxytetradecanoyl-[acyl-carrier-protein] and UDP-N-acetyl-alpha-D-glucosamine: step 1/6. Involved in the biosynthesis of lipid A, a phosphorylated glycolipid that anchors the lipopolysaccharide to the outer membrane of the cell. This Escherichia coli O157:H7 protein is Acyl-[acyl-carrier-protein]--UDP-N-acetylglucosamine O-acyltransferase.